We begin with the raw amino-acid sequence, 297 residues long: Transcription factor bHLH129 (297 aa).

The disordered stretch occupies residues 1–145 (MYPPNSSKST…SSSHQEHNSL (145 aa)). Phosphoserine is present on serine 35. Low complexity predominate over residues 68 to 82 (SSIGFDSNASSSSSL). Residues 111–121 (PNGGYGGGGEQ) are compositionally biased toward gly residues. Serine 138 bears the Phosphoserine mark. Residues 239–289 (FATHPRSIAERERRTRISGKLKKLQELVPNMDKQTSYADMLDLAVEHIKGL) enclose the bHLH domain.

In terms of assembly, homodimer.

It is found in the nucleus. This is Transcription factor bHLH129 (BHLH129) from Arabidopsis thaliana (Mouse-ear cress).